The following is a 231-amino-acid chain: Cuticlin 2 (231 aa).

An N-terminal signal peptide occupies residues 1 to 16; that stretch reads MQKLIVFFTTIAAAQA. 12 repeat units span residues 75 to 78, 79 to 82, 90 to 93, 105 to 108, 114 to 117, 121 to 124, 137 to 140, 153 to 156, 169 to 172, 192 to 195, 208 to 211, and 218 to 221. The segment at 75–221 is 12 X 4 AA repeats of A-A-P-[AVI]; that stretch reads AAPIAAPAGG…AGGYQAAAPA (147 aa).

Post-translationally, tyrosine residues can be cross-linked in vitro, leading to the formation of insoluble high molecular-weight complexes.

It is found in the secreted. In terms of biological role, component of the insoluble part of the cuticles. This Caenorhabditis elegans protein is Cuticlin 2.